A 513-amino-acid polypeptide reads, in one-letter code: Glutamyl-tRNA(Gln) amidotransferase subunit A (513 aa).

Active-site charge relay system residues include Lys85 and Ser160. The Acyl-ester intermediate role is filled by Ser184.

The protein belongs to the amidase family. GatA subfamily. Heterotrimer of A, B and C subunits.

It carries out the reaction L-glutamyl-tRNA(Gln) + L-glutamine + ATP + H2O = L-glutaminyl-tRNA(Gln) + L-glutamate + ADP + phosphate + H(+). Functionally, allows the formation of correctly charged Gln-tRNA(Gln) through the transamidation of misacylated Glu-tRNA(Gln) in organisms which lack glutaminyl-tRNA synthetase. The reaction takes place in the presence of glutamine and ATP through an activated gamma-phospho-Glu-tRNA(Gln). In Bifidobacterium longum subsp. infantis (strain ATCC 15697 / DSM 20088 / JCM 1222 / NCTC 11817 / S12), this protein is Glutamyl-tRNA(Gln) amidotransferase subunit A.